The following is a 124-amino-acid chain: UPF0337 protein blr1496 (124 aa).

Belongs to the UPF0337 (CsbD) family.

The protein is UPF0337 protein blr1496 of Bradyrhizobium diazoefficiens (strain JCM 10833 / BCRC 13528 / IAM 13628 / NBRC 14792 / USDA 110).